The chain runs to 198 residues: Syndecan-4 (198 aa).

The first 18 residues, 1 to 18 (MAPARLFALLLLFVGGVA), serve as a signal peptide directing secretion. The Extracellular portion of the chain corresponds to 19 to 145 (ESIRETEVID…QGSNIFERTE (127 aa)). 3 O-linked (Xyl...) (glycosaminoglycan) serine glycosylation sites follow: Ser39, Ser61, and Ser63. Ser95 is a glycosylation site (O-linked (Xyl...) (chondroitin sulfate) serine). The helical transmembrane segment at 146-170 (VLAALIVGGIVGILFAVFLILLLMY) threads the bilayer. Over 171-198 (RMKKKDEGSYDLGKKPIYKKAPTNEFYA) the chain is Cytoplasmic.

This sequence belongs to the syndecan proteoglycan family. As to quaternary structure, homodimer. Interacts with CDCP1 and SDCBP. Interacts (via its cytoplasmic domain) with GIPC (via its PDZ domain). Interacts (via its cytoplasmic domain) with NUDT16L1. Interacts with DNM2; this interaction is markedly enhanced at focal ahesion site upon induction of focal adhesions and stress-fiber formation. In terms of processing, shedding is enhanced by a number of factors such as heparanase, thrombin or EGF. Also by stress and wound healing. PMA-mediated shedding is inhibited by TIMP3. O-glycosylated; contains both chondroitin sulfate and heparan sulfate. Ser-39, Ser-61 and Ser-63 can all be modified by either chondroitin sulfate or heparan sulfate, and the protein exists in forms that contain only chondroitin sulfate, only heparan sulfate and both chondroitin sulfate and heparan sulfate.

It localises to the membrane. Its subcellular location is the secreted. Functionally, cell surface proteoglycan which regulates exosome biogenesis in concert with SDCBP and PDCD6IP. This is Syndecan-4 from Pongo abelii (Sumatran orangutan).